The sequence spans 512 residues: Cytochrome P450 4d1 (512 aa).

Residues glutamate 316 and cysteine 456 each coordinate heme.

The protein belongs to the cytochrome P450 family. Heme is required as a cofactor.

The protein localises to the endoplasmic reticulum membrane. It is found in the microsome membrane. Involved in the metabolism of insect hormones and in the breakdown of synthetic insecticides. The protein is Cytochrome P450 4d1 (Cyp4d1) of Drosophila simulans (Fruit fly).